The primary structure comprises 244 residues: tRNA (guanine-N(1)-)-methyltransferase (244 aa).

S-adenosyl-L-methionine-binding positions include G120 and 140–145 (IGDYIL).

It belongs to the RNA methyltransferase TrmD family. Homodimer.

It localises to the cytoplasm. It carries out the reaction guanosine(37) in tRNA + S-adenosyl-L-methionine = N(1)-methylguanosine(37) in tRNA + S-adenosyl-L-homocysteine + H(+). Specifically methylates guanosine-37 in various tRNAs. This chain is tRNA (guanine-N(1)-)-methyltransferase, found in Brucella abortus (strain S19).